The sequence spans 232 residues: MSACQTPVIVALDFPTREAALRLADQLDPKLCRVKVGKELFISCAADIVETLRNKGFEVFLDLKFHDIPNTTAMAVKAAAEMGVWMVNVHCSGGLRMMTACREVLEQRSGPQPLLIGVTVLTSMEREDLAGIGLDIDPQVQVLRLAALAEKAGLDGLVCSALEAQALKAAHPSLQLVTPGIRPAGSAQDDQRRILTPRQALDAGSDHLVIGRPISQAADPAKALAAVVAELA.

Residues Asp-13, Lys-35, 62–71 (DLKFHDIPNT), Thr-122, Arg-182, Gln-191, Gly-211, and Arg-212 contribute to the substrate site. Lys-64 acts as the Proton donor in catalysis.

It belongs to the OMP decarboxylase family. Type 1 subfamily. As to quaternary structure, homodimer.

The catalysed reaction is orotidine 5'-phosphate + H(+) = UMP + CO2. The protein operates within pyrimidine metabolism; UMP biosynthesis via de novo pathway; UMP from orotate: step 2/2. Catalyzes the decarboxylation of orotidine 5'-monophosphate (OMP) to uridine 5'-monophosphate (UMP). The sequence is that of Orotidine 5'-phosphate decarboxylase from Pseudomonas savastanoi pv. phaseolicola (strain 1448A / Race 6) (Pseudomonas syringae pv. phaseolicola (strain 1448A / Race 6)).